A 321-amino-acid chain; its full sequence is Lipoyl synthase (321 aa).

[4Fe-4S] cluster contacts are provided by cysteine 68, cysteine 73, cysteine 79, cysteine 94, cysteine 98, cysteine 101, and serine 308. Residues phenylalanine 80–threonine 297 form the Radical SAM core domain.

This sequence belongs to the radical SAM superfamily. Lipoyl synthase family. It depends on [4Fe-4S] cluster as a cofactor.

It localises to the cytoplasm. The enzyme catalyses [[Fe-S] cluster scaffold protein carrying a second [4Fe-4S](2+) cluster] + N(6)-octanoyl-L-lysyl-[protein] + 2 oxidized [2Fe-2S]-[ferredoxin] + 2 S-adenosyl-L-methionine + 4 H(+) = [[Fe-S] cluster scaffold protein] + N(6)-[(R)-dihydrolipoyl]-L-lysyl-[protein] + 4 Fe(3+) + 2 hydrogen sulfide + 2 5'-deoxyadenosine + 2 L-methionine + 2 reduced [2Fe-2S]-[ferredoxin]. The protein operates within protein modification; protein lipoylation via endogenous pathway; protein N(6)-(lipoyl)lysine from octanoyl-[acyl-carrier-protein]: step 2/2. Functionally, catalyzes the radical-mediated insertion of two sulfur atoms into the C-6 and C-8 positions of the octanoyl moiety bound to the lipoyl domains of lipoate-dependent enzymes, thereby converting the octanoylated domains into lipoylated derivatives. In Vibrio atlanticus (strain LGP32) (Vibrio splendidus (strain Mel32)), this protein is Lipoyl synthase.